Reading from the N-terminus, the 137-residue chain is Large ribosomal subunit protein uL16 (137 aa).

Belongs to the universal ribosomal protein uL16 family. As to quaternary structure, part of the 50S ribosomal subunit.

Binds 23S rRNA and is also seen to make contacts with the A and possibly P site tRNAs. The chain is Large ribosomal subunit protein uL16 from Thioalkalivibrio sulfidiphilus (strain HL-EbGR7).